Consider the following 315-residue polypeptide: Ribosomal RNA small subunit methyltransferase H (315 aa).

S-adenosyl-L-methionine is bound by residues 33 to 35 (GGH), Asp-52, Phe-84, Asp-106, and Gln-113.

The protein belongs to the methyltransferase superfamily. RsmH family.

It is found in the cytoplasm. The catalysed reaction is cytidine(1402) in 16S rRNA + S-adenosyl-L-methionine = N(4)-methylcytidine(1402) in 16S rRNA + S-adenosyl-L-homocysteine + H(+). In terms of biological role, specifically methylates the N4 position of cytidine in position 1402 (C1402) of 16S rRNA. The polypeptide is Ribosomal RNA small subunit methyltransferase H (Lactobacillus acidophilus (strain ATCC 700396 / NCK56 / N2 / NCFM)).